Here is a 249-residue protein sequence, read N- to C-terminus: Ditrans,polycis-undecaprenyl-diphosphate synthase ((2E,6E)-farnesyl-diphosphate specific) (249 aa).

Asp18 is an active-site residue. Mg(2+) is bound at residue Asp18. Substrate-binding positions include 19 to 22, Phe23, Lys31, His35, and 63 to 65; these read GNNR and SSE. Catalysis depends on Asn66, which acts as the Proton acceptor. Residues Trp67, Arg69, Arg186, and 192-194 contribute to the substrate site; that span reads RLS. Glu205 is a binding site for Mg(2+).

It belongs to the UPP synthase family. In terms of assembly, homodimer. The cofactor is Mg(2+).

It carries out the reaction 8 isopentenyl diphosphate + (2E,6E)-farnesyl diphosphate = di-trans,octa-cis-undecaprenyl diphosphate + 8 diphosphate. Functionally, catalyzes the sequential condensation of isopentenyl diphosphate (IPP) with (2E,6E)-farnesyl diphosphate (E,E-FPP) to yield (2Z,6Z,10Z,14Z,18Z,22Z,26Z,30Z,34E,38E)-undecaprenyl diphosphate (di-trans,octa-cis-UPP). UPP is the precursor of glycosyl carrier lipid in the biosynthesis of bacterial cell wall polysaccharide components such as peptidoglycan and lipopolysaccharide. In Acinetobacter baylyi (strain ATCC 33305 / BD413 / ADP1), this protein is Ditrans,polycis-undecaprenyl-diphosphate synthase ((2E,6E)-farnesyl-diphosphate specific).